The chain runs to 232 residues: Ubiquinone biosynthesis O-methyltransferase (232 aa).

4 residues coordinate S-adenosyl-L-methionine: R36, G55, D76, and M120.

The protein belongs to the methyltransferase superfamily. UbiG/COQ3 family.

The enzyme catalyses a 3-demethylubiquinol + S-adenosyl-L-methionine = a ubiquinol + S-adenosyl-L-homocysteine + H(+). It catalyses the reaction a 3-(all-trans-polyprenyl)benzene-1,2-diol + S-adenosyl-L-methionine = a 2-methoxy-6-(all-trans-polyprenyl)phenol + S-adenosyl-L-homocysteine + H(+). Its pathway is cofactor biosynthesis; ubiquinone biosynthesis. Its function is as follows. O-methyltransferase that catalyzes the 2 O-methylation steps in the ubiquinone biosynthetic pathway. The sequence is that of Ubiquinone biosynthesis O-methyltransferase from Thiobacillus denitrificans (strain ATCC 25259 / T1).